Here is a 280-residue protein sequence, read N- to C-terminus: 4-hydroxy-tetrahydrodipicolinate reductase (280 aa).

NAD(+) is bound by residues 14 to 19 (GAAGRM), D40, 106 to 108 (ATT), and 130 to 133 (APSM). Residue H166 is the Proton donor/acceptor of the active site. H167 provides a ligand contact to (S)-2,3,4,5-tetrahydrodipicolinate. The active-site Proton donor is K170. 176 to 177 (GT) lines the (S)-2,3,4,5-tetrahydrodipicolinate pocket.

Belongs to the DapB family.

It localises to the cytoplasm. The enzyme catalyses (S)-2,3,4,5-tetrahydrodipicolinate + NAD(+) + H2O = (2S,4S)-4-hydroxy-2,3,4,5-tetrahydrodipicolinate + NADH + H(+). The catalysed reaction is (S)-2,3,4,5-tetrahydrodipicolinate + NADP(+) + H2O = (2S,4S)-4-hydroxy-2,3,4,5-tetrahydrodipicolinate + NADPH + H(+). It functions in the pathway amino-acid biosynthesis; L-lysine biosynthesis via DAP pathway; (S)-tetrahydrodipicolinate from L-aspartate: step 4/4. Catalyzes the conversion of 4-hydroxy-tetrahydrodipicolinate (HTPA) to tetrahydrodipicolinate. The sequence is that of 4-hydroxy-tetrahydrodipicolinate reductase from Rhodopirellula baltica (strain DSM 10527 / NCIMB 13988 / SH1).